The chain runs to 249 residues: 2-C-methyl-D-erythritol 4-phosphate cytidylyltransferase (249 aa).

Belongs to the IspD/TarI cytidylyltransferase family. IspD subfamily.

The enzyme catalyses 2-C-methyl-D-erythritol 4-phosphate + CTP + H(+) = 4-CDP-2-C-methyl-D-erythritol + diphosphate. Its pathway is isoprenoid biosynthesis; isopentenyl diphosphate biosynthesis via DXP pathway; isopentenyl diphosphate from 1-deoxy-D-xylulose 5-phosphate: step 2/6. Catalyzes the formation of 4-diphosphocytidyl-2-C-methyl-D-erythritol from CTP and 2-C-methyl-D-erythritol 4-phosphate (MEP). This chain is 2-C-methyl-D-erythritol 4-phosphate cytidylyltransferase, found in Shewanella oneidensis (strain ATCC 700550 / JCM 31522 / CIP 106686 / LMG 19005 / NCIMB 14063 / MR-1).